A 465-amino-acid polypeptide reads, in one-letter code: MVMEKPSPLLVGREFVRQYYTLLNQAPDMLHRFYGKNSSYVHGGLDSNGKPADAVYGQKEIHRKVMSQNFTNCHTKIRHVDAHATLNDGVVVQVMGLLSNNNQALRRFMQTFVLAPEGSVANKFYVHNDIFRYQDEVFGGFITEPQEESEEEVEEPEERQQTPEVVPDDSGTFYDQTVSNDLEEHLEEPVAEPEPEPEPEPEQEPVSEVQEEKSEPVLEETAPEDVQKSSSPAPADIAQTVQEDLRTFSWASVTSKNLPPSGAVPVTGIPPHVVKVPASQPRPESKPESQIPLQRPQRDQRVREQRINVPPQRGPRPVREAGEQGDVEPRRIVRHPDSHQLFIGNLPHEVDKSELKDFFQNYGNVVELRINSGGKLPNFGFVVFDDSEPVQKVLSNRPIMFRGEVRLNVEEKKTRAAREGDRRDNRLRGPGGPRGGLGGGMRGPPRGGMVQKPGFGVGRSIAPRQ.

One can recognise an NTF2 domain in the interval 11–133 (VGREFVRQYY…FYVHNDIFRY (123 aa)). Glycyl lysine isopeptide (Lys-Gly) (interchain with G-Cter in ubiquitin) cross-links involve residues lysine 36, lysine 50, lysine 59, lysine 64, lysine 76, and lysine 123. The tract at residues 142 to 224 (ITEPQEESEE…EPVLEETAPE (83 aa)) is acidic disordered region. Residue threonine 143 is modified to Phosphothreonine. 2 stretches are compositionally biased toward acidic residues: residues 145 to 157 (PQEE…EEPE) and 184 to 205 (EHLE…EQEP). A disordered region spans residues 145 to 242 (PQEESEEEVE…APADIAQTVQ (98 aa)). Serine 149 is subject to Phosphoserine. Phosphoserine is present on residues serine 230, serine 231, serine 249, and serine 252. The interval 254-326 (TSKNLPPSGA…PVREAGEQGD (73 aa)) is disordered. Basic and acidic residues-rich tracts occupy residues 296-306 (PQRDQRVREQR) and 317-326 (PVREAGEQGD). The region spanning 339 to 414 (HQLFIGNLPH…VRLNVEEKKT (76 aa)) is the RRM domain. Glycyl lysine isopeptide (Lys-Gly) (interchain with G-Cter in ubiquitin) cross-links involve residues lysine 352 and lysine 356. Residue serine 372 is modified to Phosphoserine. Lysine 375 is covalently cross-linked (Glycyl lysine isopeptide (Lys-Gly) (interchain with G-Cter in ubiquitin)). N6-acetyllysine; alternate is present on lysine 375. Lysine 375 is covalently cross-linked (Glycyl lysine isopeptide (Lys-Gly) (interchain with G-Cter in SUMO2); alternate). A Glycyl lysine isopeptide (Lys-Gly) (interchain with G-Cter in ubiquitin); alternate cross-link involves residue lysine 392. The interval 409–465 (VEEKKTRAAREGDRRDNRLRGPGGPRGGLGGGMRGPPRGGMVQKPGFGVGRSIAPRQ) is RG-rich region. Over residues 412-427 (KKTRAAREGDRRDNRL) the composition is skewed to basic and acidic residues. The segment at 412–465 (KKTRAAREGDRRDNRLRGPGGPRGGLGGGMRGPPRGGMVQKPGFGVGRSIAPRQ) is disordered. Arginine 428 carries the asymmetric dimethylarginine modification. The span at 429 to 446 (GPGGPRGGLGGGMRGPPR) shows a compositional bias: gly residues. Arginine 434 bears the Asymmetric dimethylarginine; alternate mark. Residues arginine 434, arginine 446, arginine 459, and arginine 464 each carry the omega-N-methylarginine; alternate modification. At arginine 459 the chain carries Dimethylated arginine; alternate.

As to quaternary structure, homodimer and oligomer. Component of a TAU mRNP complex, at least composed of IGF2BP1, ELAVL4 and G3BP1. Binds to the SH3 domain of Ras GTPase-activating protein (RASA1) in proliferating cells. No interaction in quiescent cells. Interacts (via NTF2 domain) with USP10; inhibiting stress granule formation by lowering G3BP1 valence. Interacts (via NTF2 domain) with CAPRIN1; promoting stress granule formation by lowering the saturation-concentration of G3BP1. Interacts (via NTF2 domain) with UBAP2L; promoting stress granule formation. Associates (via RG-rich region) with 40S ribosome subunits. Interacts with RPTOR and SPAG5; this complex is increased by oxidative stress. Interacts with ATXN2L. Interacts with STYXL1. Interacts with CGAS (via N-terminus); this interaction promotes the DNA-binding and activation of CGAS. Interacts (via C-terminus) with RIGI. Interacts with PABPC1. Interacts with QKI (isoforms QKI6 and QKI7); directing N(7)-methylguanine-containing mRNAs to stress granules. The cofactor is Mg(2+). Phosphorylation of the acidic disordered region regulates stress granule assembly. RASA1-dependent phosphorylation of Ser-149 induces a conformational change that prevents self-association. Dephosphorylation after HRAS activation is required for stress granule assembly. Ser-149 phosphorylation induces partial nuclear localization. In terms of processing, arg-435 is dimethylated, probably to asymmetric dimethylarginine. Post-translationally, ubiquitinated by TRIM21 via 'Lys-63'-linked polyubiquitination in the NTF2 domain in response to heat shock, leading to stress granule disassembly: ubiquitination promotes interaction with the FAF2 adapter, followed by interaction with VCP, which extracts G3BP1 from stress granules, leading to stress granule disassembly. In case of prolonged stress, ubiquitination by TRIM21 leads to autophagy-dependent degradation of G3BP1 via recruitment of ubiquitinated G3BP1 by SQSTM1 and/or CALCOCO2 to autophagosomes.

The protein localises to the cytoplasm. Its subcellular location is the cytosol. The protein resides in the perikaryon. It localises to the stress granule. It is found in the nucleus. It catalyses the reaction ATP + H2O = ADP + phosphate + H(+). With respect to regulation, under physiological conditions, G3BP1 adopts a compact state that is stabilized by intramolecular interactions between the RG-rich and the acidic regions that inhibit phase separation. Upon stress, polysomes disassemble and mRNAs are released in an unfolded protein-free state. Binding of unfolded mRNA to G3BP1 outcompetes the intramolecular interactions and RNA-bound G3BP1 adopts an expanded conformation in which the RG-rich region becomes exposed to engage in protein-protein and protein-RNA interactions, allowing physical cross-linking of RNA molecules to form protein-RNA condensates, leading to liquid-liquid phase separation (LLPS). In terms of biological role, protein involved in various processes, such as stress granule formation and innate immunity. Plays an essential role in stress granule formation. Stress granules are membraneless compartments that store mRNAs and proteins, such as stalled translation pre-initiation complexes, in response to stress. Promotes formation of stress granules phase-separated membraneless compartment by undergoing liquid-liquid phase separation (LLPS) upon unfolded RNA-binding: functions as a molecular switch that triggers RNA-dependent LLPS in response to a rise in intracellular free RNA concentrations. Also acts as an ATP- and magnesium-dependent helicase: unwinds DNA/DNA, RNA/DNA, and RNA/RNA substrates with comparable efficiency. Acts unidirectionally by moving in the 5' to 3' direction along the bound single-stranded DNA. Unwinds preferentially partial DNA and RNA duplexes having a 17 bp annealed portion and either a hanging 3' tail or hanging tails at both 5'- and 3'-ends. Plays an essential role in innate immunity by promoting CGAS and RIGI activity. Participates in the DNA-triggered cGAS/STING pathway by promoting the DNA binding and activation of CGAS. Triggers the condensation of cGAS, a process probably linked to the formation of membrane-less organelles. Also enhances RIGI-induced type I interferon production probably by helping RIGI at sensing pathogenic RNA. May also act as a phosphorylation-dependent sequence-specific endoribonuclease in vitro: Cleaves exclusively between cytosine and adenine and cleaves MYC mRNA preferentially at the 3'-UTR. This Bos taurus (Bovine) protein is Ras GTPase-activating protein-binding protein 1 (G3BP1).